We begin with the raw amino-acid sequence, 164 residues long: MPDTMLPACFLGLLAFSSACYFQNCPRGGKRAMSDLELRQCLPCGPGGKGRCFGPSICCADELGCFVGTAEALRCQEENYLPSPCQSGQKACGSGGRCAAFGVCCNDESCVTEPECREGFHRRARASDRSNATQLDGPAGALLLRLVQLAGAPEPFEPAQPDAY.

A signal peptide spans methionine 1–alanine 19. A disulfide bond links cysteine 20 and cysteine 25. Residue glycine 28 is modified to Glycine amide. 7 cysteine pairs are disulfide-bonded: cysteine 41–cysteine 85, cysteine 44–cysteine 58, cysteine 52–cysteine 75, cysteine 59–cysteine 65, cysteine 92–cysteine 104, cysteine 98–cysteine 116, and cysteine 105–cysteine 110. The N-linked (GlcNAc...) asparagine glycan is linked to asparagine 131.

It belongs to the vasopressin/oxytocin family. Interacts with vasopressin receptors V1bR/AVPR1B (Ki=85 pM), V1aR/AVPR1A (Ki=0.6 nM) and V2R/AVPR2 (Ki=4.9 nM). Interacts with oxytocin receptor (OXTR) (Ki=110 nM). In terms of assembly, (Microbial infection) May interact with SARS coronavirus-2/SARS-CoV-2; they may form a complex with secreted ACE2.

The protein resides in the secreted. In terms of biological role, specifically binds vasopressin. Functionally, has a direct antidiuretic action on the kidney, it also causes vasoconstriction of the peripheral vessels. Acts by binding to vasopressin receptors (V1bR/AVPR1B, V1aR/AVPR1A, and V2R/AVPR2). The chain is Vasopressin-neurophysin 2-copeptin (AVP) from Homo sapiens (Human).